The chain runs to 694 residues: LMBR1 domain-containing protein 2 homolog (694 aa).

Residues 1–3 (MAY) lie on the Extracellular side of the membrane. A helical membrane pass occupies residues 4 to 26 (LLSFGIVAALFLASISLYRYGNI). Residues 27 to 30 (PRQH) are Cytoplasmic-facing. A helical transmembrane segment spans residues 31-51 (ILVTLSVLTAWCFSFLIVFTI). Topologically, residues 52 to 106 (PLDVTSTLYRQCVEEHRPTPAPNVTNTSSATVGPPPQCQEPWGMVPASVFPNLWR) are extracellular. N-linked (GlcNAc...) asparagine glycans are attached at residues Asn74 and Asn77. The helical transmembrane segment at 107–127 (IIYWSSQFLTWLIMPLMQSYL) threads the bilayer. Topologically, residues 128–144 (KAGDFTVKGKLKSALIE) are cytoplasmic. A helical membrane pass occupies residues 145-165 (NAIYYGSYLFICGVLLIYIAV). The Extracellular portion of the chain corresponds to 166-181 (KGESLDWQKLKAIASS). Residues 182–202 (ASNTWGLFLLILLLGYALVEV) form a helical membrane-spanning segment. The Cytoplasmic segment spans residues 203 to 381 (PRSLWNNAKP…ECLLKAPFLK (179 aa)). Residues 222-249 (KAAKLSTEKAEAEEHVDDILESLQGLSR) adopt a coiled-coil conformation. Residues 382–402 (TMCVLTATMSAMVVWSELTFF) form a helical membrane-spanning segment. The Extracellular segment spans residues 403–426 (SRHPVLSIFANVIYVAKESYDFFT). The helical transmembrane segment at 427 to 447 (IEVFSMVVLCYFFYCTYSTIL) threads the bilayer. At 448 to 467 (RIRFLNLYYLAPHHQTNEHS) the chain is on the cytoplasmic side. The chain crosses the membrane as a helical span at residues 468 to 488 (LIFSGMLLCRLTPPMCLNFLG). Residues 489–514 (LIHMDTHIIPNRIMETVYTQIMGHMD) are Extracellular-facing. The helical transmembrane segment at 515-535 (VIGIISNGFNIYFPMCMLAFC) threads the bilayer. Topologically, residues 536–694 (LATWFSLGSR…PPPRGLFDDV (159 aa)) are cytoplasmic. A coiled-coil region spans residues 564–592 (ELVQEGKDLIAREKRRRQRAEEAMARRRD). A disordered region spans residues 673–694 (DYEAETDGRIVGPPPRGLFDDV).

The protein belongs to the LIMR family.

The protein resides in the membrane. This chain is LMBR1 domain-containing protein 2 homolog, found in Drosophila melanogaster (Fruit fly).